The primary structure comprises 524 residues: Na(+)/H(+) antiporter NhaB (524 aa).

13 helical membrane passes run 23-43 (LAII…SPFV), 45-65 (GWML…CYPL), 98-118 (LLLI…LFIF), 136-156 (CVAS…AVVI), 203-223 (LMMH…VGEP), 239-259 (FFMR…LVCI), 304-324 (ALIG…VGLV), 325-345 (GLSV…HALG), 358-378 (LTVF…TPII), 392-412 (LFYL…VGTV), 420-440 (AFEL…AINT), 448-468 (ATPN…APLI), and 479-499 (ALPY…YLLV).

The protein belongs to the NhaB Na(+)/H(+) (TC 2.A.34) antiporter family.

It is found in the cell inner membrane. It catalyses the reaction 2 Na(+)(in) + 3 H(+)(out) = 2 Na(+)(out) + 3 H(+)(in). Functionally, na(+)/H(+) antiporter that extrudes sodium in exchange for external protons. The polypeptide is Na(+)/H(+) antiporter NhaB (Yersinia enterocolitica serotype O:8 / biotype 1B (strain NCTC 13174 / 8081)).